Consider the following 131-residue polypeptide: Small ribosomal subunit protein uS8 (131 aa).

It belongs to the universal ribosomal protein uS8 family. In terms of assembly, part of the 30S ribosomal subunit. Contacts proteins S5 and S12.

One of the primary rRNA binding proteins, it binds directly to 16S rRNA central domain where it helps coordinate assembly of the platform of the 30S subunit. The protein is Small ribosomal subunit protein uS8 of Campylobacter hominis (strain ATCC BAA-381 / DSM 21671 / CCUG 45161 / LMG 19568 / NCTC 13146 / CH001A).